The sequence spans 527 residues: EGF domain-specific O-linked N-acetylglucosamine transferase (527 aa).

The N-terminal stretch at 1–17 (MFMLLVFGALLPEVPLS) is a signal peptide. The short motif at 295–297 (DYD) is the Required for optimal activity element. Asn354 carries an N-linked (GlcNAc...) asparagine glycan. Residues 524-527 (HDEL) carry the Prevents secretion from ER motif.

The protein belongs to the glycosyltransferase 61 family.

It localises to the endoplasmic reticulum lumen. It carries out the reaction L-seryl-[protein] + UDP-N-acetyl-alpha-D-glucosamine = 3-O-(N-acetyl-beta-D-glucosaminyl)-L-seryl-[protein] + UDP + H(+). It catalyses the reaction L-threonyl-[protein] + UDP-N-acetyl-alpha-D-glucosamine = 3-O-(N-acetyl-beta-D-glucosaminyl)-L-threonyl-[protein] + UDP + H(+). Functionally, catalyzes the transfer of a single N-acetylglucosamine from UDP-GlcNAc to a serine or threonine residue in extracellular proteins resulting in their modification with a beta-linked N-acetylglucosamine (O-GlcNAc). Specifically glycosylates the Thr residue located between the fifth and sixth conserved cysteines of folded EGF-like domains. The chain is EGF domain-specific O-linked N-acetylglucosamine transferase (EOGT) from Bos taurus (Bovine).